Consider the following 571-residue polypeptide: Probable pectinesterase/pectinesterase inhibitor 58 (571 aa).

The signal sequence occupies residues 1–28 (MGVDGELKKKKCIIAGVITALLVLMVVA). N-linked (GlcNAc...) asparagine glycosylation is found at N36, N91, N207, and N216. Positions 49–204 (KTATTAVEAV…RELTSNGLAM (156 aa)) are pectinesterase inhibitor 58. The tract at residues 259 to 556 (NVVVAHDGSG…FTPARFLRGN (298 aa)) is pectinesterase 58. T335 is a binding site for substrate. N-linked (GlcNAc...) asparagine glycosylation occurs at N347. Substrate is bound at residue Q365. D388 functions as the Proton donor; for pectinesterase activity in the catalytic mechanism. C402 and C422 form a disulfide bridge. Residue D409 is the Nucleophile; for pectinesterase activity of the active site. Substrate contacts are provided by R477 and W479.

This sequence in the N-terminal section; belongs to the PMEI family. It in the C-terminal section; belongs to the pectinesterase family. In terms of tissue distribution, expressed in siliques, but not in flower buds.

Its subcellular location is the secreted. It is found in the cell wall. It catalyses the reaction [(1-&gt;4)-alpha-D-galacturonosyl methyl ester](n) + n H2O = [(1-&gt;4)-alpha-D-galacturonosyl](n) + n methanol + n H(+). The protein operates within glycan metabolism; pectin degradation; 2-dehydro-3-deoxy-D-gluconate from pectin: step 1/5. Acts in the modification of cell walls via demethylesterification of cell wall pectin. This chain is Probable pectinesterase/pectinesterase inhibitor 58 (PME58), found in Arabidopsis thaliana (Mouse-ear cress).